The sequence spans 229 residues: ABC transporter I family member 1 (229 aa).

Residues 11–228 enclose the ABC transporter domain; the sequence is LLLQNVSCMR…LIDMLDRADI (218 aa). 43 to 50 contacts ATP; it reads GTNGSGKS.

The protein belongs to the ABC transporter superfamily. ABCI family.

The protein localises to the membrane. It carries out the reaction heme b(in) + ATP + H2O = heme b(out) + ADP + phosphate + H(+). Functionally, part of the ABC transporter complex CcmAB involved in the biogenesis of c-type cytochromes; once thought to export heme, this seems not to be the case, but its exact role is uncertain. Responsible for energy coupling to the transport system. This is ABC transporter I family member 1 (ABCI1) from Arabidopsis thaliana (Mouse-ear cress).